We begin with the raw amino-acid sequence, 264 residues long: Small ribosomal subunit protein uS2 (264 aa).

Residues 233-264 (AQTQAGGKAEQEAPATEEAADAQTEEAATPAE) are disordered.

It belongs to the universal ribosomal protein uS2 family.

This chain is Small ribosomal subunit protein uS2, found in Psychrobacter arcticus (strain DSM 17307 / VKM B-2377 / 273-4).